Here is a 1463-residue protein sequence, read N- to C-terminus: Chitin binding domain (ChtBD2) containing chtb-1 (1463 aa).

The N-terminal stretch at 1-17 (MLRNLILITLLVASGHG) is a signal peptide. A disordered region spans residues 70-99 (SSVPSVPAENTQPQQHPKARKPASPNICEQ). Residues 94–164 (PNICEQDNGA…IVPKRMSSLS (71 aa)) form the Chitin-binding type-2 domain. A disulfide bridge connects residues Cys141 and Cys154. 2 disordered regions span residues 720-773 (IDSD…DFPI) and 841-869 (KNPK…FPDS). Polar residues predominate over residues 722 to 734 (SDTNSTTNPSQPE). 2 stretches are compositionally biased toward basic residues: residues 740 to 756 (NNTK…KPKK) and 843 to 853 (PKKRKTKRRKQ).

In Caenorhabditis elegans, this protein is Chitin binding domain (ChtBD2) containing chtb-1.